Here is a 179-residue protein sequence, read N- to C-terminus: Large ribosomal subunit protein uL5 (179 aa).

This sequence belongs to the universal ribosomal protein uL5 family. Part of the 50S ribosomal subunit; part of the 5S rRNA/L5/L18/L25 subcomplex. Contacts the 5S rRNA and the P site tRNA. Forms a bridge to the 30S subunit in the 70S ribosome.

Its function is as follows. This is one of the proteins that bind and probably mediate the attachment of the 5S RNA into the large ribosomal subunit, where it forms part of the central protuberance. In the 70S ribosome it contacts protein S13 of the 30S subunit (bridge B1b), connecting the 2 subunits; this bridge is implicated in subunit movement. Contacts the P site tRNA; the 5S rRNA and some of its associated proteins might help stabilize positioning of ribosome-bound tRNAs. The sequence is that of Large ribosomal subunit protein uL5 from Yersinia enterocolitica serotype O:8 / biotype 1B (strain NCTC 13174 / 8081).